Reading from the N-terminus, the 387-residue chain is Sulfoacetaldehyde reductase (387 aa).

It belongs to the iron-containing alcohol dehydrogenase family.

It carries out the reaction 2-hydroxyethane-1-sulfonate + NAD(+) = sulfoacetaldehyde + NADH + H(+). It functions in the pathway organosulfur degradation; alkanesulfonate degradation. Functionally, involved in an anaerobic respiration pathway that converts the sulfonate taurine (2-aminoethanesulfonate) to ammonia, acetate and sulfide. Catalyzes the NADH-dependent reduction of sulfoacetaldehyde to 2-hydroxyethane-1-sulfonate (isethionate). Does not accept acetaldehyde as a substrate. This Bilophila wadsworthia (strain 3_1_6) protein is Sulfoacetaldehyde reductase.